The sequence spans 160 residues: Transcription elongation factor GreA (160 aa).

The stretch at 49 to 75 (SEYDEAKNDQAFTEGRIIQLENMLKNA) forms a coiled coil.

It belongs to the GreA/GreB family.

Functionally, necessary for efficient RNA polymerase transcription elongation past template-encoded arresting sites. The arresting sites in DNA have the property of trapping a certain fraction of elongating RNA polymerases that pass through, resulting in locked ternary complexes. Cleavage of the nascent transcript by cleavage factors such as GreA or GreB allows the resumption of elongation from the new 3'terminus. GreA releases sequences of 2 to 3 nucleotides. The protein is Transcription elongation factor GreA of Clostridium beijerinckii (strain ATCC 51743 / NCIMB 8052) (Clostridium acetobutylicum).